We begin with the raw amino-acid sequence, 438 residues long: Ribosomal protein uS12 methylthiotransferase RimO (438 aa).

The MTTase N-terminal domain occupies 4–114 (PRVSFVSLGC…VMNAVHEVAP (111 aa)). Residues C13, C49, C78, C146, C150, and C153 each coordinate [4Fe-4S] cluster. The Radical SAM core domain maps to 132 to 370 (LTPRHYAYLK…MAKQQQISTN (239 aa)). The 66-residue stretch at 373–438 (KKKVGKRLPV…DAYDLHGTAV (66 aa)) folds into the TRAM domain.

This sequence belongs to the methylthiotransferase family. RimO subfamily. Requires [4Fe-4S] cluster as cofactor.

The protein localises to the cytoplasm. It carries out the reaction L-aspartate(89)-[ribosomal protein uS12]-hydrogen + (sulfur carrier)-SH + AH2 + 2 S-adenosyl-L-methionine = 3-methylsulfanyl-L-aspartate(89)-[ribosomal protein uS12]-hydrogen + (sulfur carrier)-H + 5'-deoxyadenosine + L-methionine + A + S-adenosyl-L-homocysteine + 2 H(+). Functionally, catalyzes the methylthiolation of an aspartic acid residue of ribosomal protein uS12. This is Ribosomal protein uS12 methylthiotransferase RimO from Brucella ovis (strain ATCC 25840 / 63/290 / NCTC 10512).